Consider the following 71-residue polypeptide: UPF0346 protein BCQ_2236 (71 aa).

Belongs to the UPF0346 family.

This is UPF0346 protein BCQ_2236 from Bacillus cereus (strain Q1).